We begin with the raw amino-acid sequence, 807 residues long: Glycerol-3-phosphate acyltransferase (807 aa).

The HXXXXD motif motif lies at 308–313 (CHRSHM).

It belongs to the GPAT/DAPAT family.

The protein localises to the cell inner membrane. It carries out the reaction sn-glycerol 3-phosphate + an acyl-CoA = a 1-acyl-sn-glycero-3-phosphate + CoA. Its pathway is phospholipid metabolism; CDP-diacylglycerol biosynthesis; CDP-diacylglycerol from sn-glycerol 3-phosphate: step 1/3. This chain is Glycerol-3-phosphate acyltransferase, found in Shewanella woodyi (strain ATCC 51908 / MS32).